A 784-amino-acid polypeptide reads, in one-letter code: Armadillo repeat-containing X-linked protein 2 (784 aa).

At 1–6 the chain is on the mitochondrial intermembrane side; the sequence is MSRARD. Mitochondrion outer membrane (MOM)-targeting sequence stretches follow at residues 1-6 and 26-40; these read MSRARD and KYTRGKDQKKKRLTK. Residues 7-27 form a helical; Signal-anchor membrane-spanning segment; sequence AGCVAAGIVIGASAWYCVYKY. The Cytoplasmic portion of the chain corresponds to 28–784; the sequence is TRGKDQKKKR…VKVIKLVNKF (757 aa). Disordered regions lie at residues 328-353, 388-461, and 488-522; these read TSGGAAVPSGGAATPRAAASTQRTAS, HSGA…ELGM, and PESEEGESGWTDTESDSDSEPDVPQRGKGKRTIPM. A compositionally biased stretch (low complexity) spans 396 to 418; sequence GTSGSSKTAATGKKAAPGAHTGA. Residues 488–508 show a composition bias toward acidic residues; it reads PESEEGESGWTDTESDSDSEP. 3 ARM repeats span residues 528 to 568, 570 to 609, and 650 to 689; these read PYEI…NNAN, SCNQETIRKLGGLPIIANMINKTDPHIKEKALMAMNNLSE, and ITNDYQHLLVNSIANFFRLLSQGGGKIKVEILKILSNFAE.

It belongs to the eutherian X-chromosome-specific Armcx family. In terms of tissue distribution, widely expressed in the adult nervous tissue, especially in the forebrain, including the cerebral cortex, hippocampus and thalamus.

It is found in the mitochondrion. Its subcellular location is the mitochondrion outer membrane. Functionally, may regulate the dynamics and distribution of mitochondria in neural cells. The chain is Armadillo repeat-containing X-linked protein 2 (Armcx2) from Mus musculus (Mouse).